The primary structure comprises 465 residues: Interferon-inducible GTPase 5 (465 aa).

The IRG-type G domain occupies 53–235 (TRLEVGVTGE…PLLMSTWERD (183 aa)). Residues 62 to 69 (ESGAGKSS), 87 to 91 (TGVVE), 169 to 171 (KVD), and 216 to 218 (SNL) each bind GTP. A phosphoserine mark is found at Ser-247 and Ser-304. Positions 405-438 (EEEEDTQPDVSLEAAGDNGVEKRGSGEGSMEEAP) are disordered.

The protein belongs to the TRAFAC class dynamin-like GTPase superfamily. IRG family.

The protein localises to the cell projection. It is found in the cilium. It localises to the flagellum. The protein resides in the lipid droplet. It catalyses the reaction GTP + H2O = GDP + phosphate + H(+). Functionally, required for sperm motility and therefore male fertility, via positive regulation of spermatozoa fibrous sheath formation. The chain is Interferon-inducible GTPase 5 (IRGC) from Bos taurus (Bovine).